The sequence spans 160 residues: Cytochrome b6-f complex subunit 4 (160 aa).

Transmembrane regions (helical) follow at residues 36-56 (LLYIFPVVILGTIACNVGLAV), 95-115 (LLGVLLMVSVPTGLLTVPFLE), and 131-151 (TVFLFGTALSLWLGIGATLPI).

This sequence belongs to the cytochrome b family. PetD subfamily. As to quaternary structure, the 4 large subunits of the cytochrome b6-f complex are cytochrome b6, subunit IV (17 kDa polypeptide, petD), cytochrome f and the Rieske protein, while the 4 small subunits are petG, petL, petM and petN. The complex functions as a dimer.

The protein localises to the plastid. The protein resides in the chloroplast thylakoid membrane. Functionally, component of the cytochrome b6-f complex, which mediates electron transfer between photosystem II (PSII) and photosystem I (PSI), cyclic electron flow around PSI, and state transitions. The polypeptide is Cytochrome b6-f complex subunit 4 (Amborella trichopoda).